The chain runs to 160 residues: SsrA-binding protein (160 aa).

The tract at residues 1 to 23 (MARKKKQDKGQGPKTIAQNRRAR) is disordered.

The protein belongs to the SmpB family.

It is found in the cytoplasm. Required for rescue of stalled ribosomes mediated by trans-translation. Binds to transfer-messenger RNA (tmRNA), required for stable association of tmRNA with ribosomes. tmRNA and SmpB together mimic tRNA shape, replacing the anticodon stem-loop with SmpB. tmRNA is encoded by the ssrA gene; the 2 termini fold to resemble tRNA(Ala) and it encodes a 'tag peptide', a short internal open reading frame. During trans-translation Ala-aminoacylated tmRNA acts like a tRNA, entering the A-site of stalled ribosomes, displacing the stalled mRNA. The ribosome then switches to translate the ORF on the tmRNA; the nascent peptide is terminated with the 'tag peptide' encoded by the tmRNA and targeted for degradation. The ribosome is freed to recommence translation, which seems to be the essential function of trans-translation. In Thermobifida fusca (strain YX), this protein is SsrA-binding protein.